The sequence spans 250 residues: Putative HTH-type transcriptional regulatory protein PAE1627 (250 aa).

One can recognise an HTH cro/C1-type domain in the interval 129-183; the sequence is LRAKRQQAGLSLGTLATNLGVTRETVYRYERGEIEAPLKIAEKLINMFGEDITKK. The H-T-H motif DNA-binding region spans 140-159; that stretch reads LGTLATNLGVTRETVYRYER.

The polypeptide is Putative HTH-type transcriptional regulatory protein PAE1627 (Pyrobaculum aerophilum (strain ATCC 51768 / DSM 7523 / JCM 9630 / CIP 104966 / NBRC 100827 / IM2)).